Reading from the N-terminus, the 385-residue chain is Cytochrome b (385 aa).

4 helical membrane passes run 32–52 (FGSL…TLAM), 76–98 (WLVR…LHIG), 113–133 (TWAI…LGYV), and 179–199 (FFAL…MHLI). Residues H82 and H96 each coordinate heme b. The heme b site is built by H183 and H197. H202 provides a ligand contact to a ubiquinone. A run of 4 helical transmembrane segments spans residues 226–246 (FVFK…IFVF), 290–310 (LLGV…PITD), 322–342 (LSKV…QIGA), and 349–369 (FIEF…VIVP).

This sequence belongs to the cytochrome b family. As to quaternary structure, fungal cytochrome b-c1 complex contains 10 subunits; 3 respiratory subunits, 2 core proteins and 5 low-molecular weight proteins. Cytochrome b-c1 complex is a homodimer. Heme b is required as a cofactor.

The protein resides in the mitochondrion inner membrane. Its function is as follows. Component of the ubiquinol-cytochrome c reductase complex (complex III or cytochrome b-c1 complex) that is part of the mitochondrial respiratory chain. The b-c1 complex mediates electron transfer from ubiquinol to cytochrome c. Contributes to the generation of a proton gradient across the mitochondrial membrane that is then used for ATP synthesis. This chain is Cytochrome b (cob), found in Aspergillus terreus (strain NIH 2624 / FGSC A1156).